A 98-amino-acid polypeptide reads, in one-letter code: uncharacterized protein (98 aa).

A compositionally biased stretch (basic residues) spans 19 to 31 (RRMSKRSKNKAKK). Positions 19-47 (RRMSKRSKNKAKKERVPVEDRPPTPMPTS) are disordered.

The protein belongs to the lymphocryptovirus BNLF2B family.

This is an uncharacterized protein from Epstein-Barr virus (strain AG876) (HHV-4).